We begin with the raw amino-acid sequence, 743 residues long: Polyribonucleotide nucleotidyltransferase (743 aa).

Mg(2+) contacts are provided by Asp-489 and Asp-495. The 63-residue stretch at 556–618 (PRIEKMHIGK…PCIDAAIGMI (63 aa)) folds into the KH domain. The 71-residue stretch at 628-698 (GETYPGKITS…KTGKFKLSRK (71 aa)) folds into the S1 motif domain. Residues 704–743 (PEGYVEPQPRERRERREGGREGGRNFERRGGDRDHREPRG) form a disordered region.

This sequence belongs to the polyribonucleotide nucleotidyltransferase family. It depends on Mg(2+) as a cofactor.

It is found in the cytoplasm. The catalysed reaction is RNA(n+1) + phosphate = RNA(n) + a ribonucleoside 5'-diphosphate. Its function is as follows. Involved in mRNA degradation. Catalyzes the phosphorolysis of single-stranded polyribonucleotides processively in the 3'- to 5'-direction. The protein is Polyribonucleotide nucleotidyltransferase of Porphyromonas gingivalis (strain ATCC 33277 / DSM 20709 / CIP 103683 / JCM 12257 / NCTC 11834 / 2561).